A 303-amino-acid polypeptide reads, in one-letter code: MNGENLNLGTLVSETRNPATMTLDQLSTLEMMQVFNQEDRKVPEAIAQVLPAIAEAVDLATASLQAGGRLIYLGAGTSGRLGVLDASECPPTFGVPHGLVIGLIAGGPGALLKAVEGAEDDPALGEADLKALSLTATDMVIGLAASGRTPYVIGALRYARDVGCRTAAISCNPHSPIAQEAQVAISPVVGPEALTGSTRLKSGTAQKLVLNMISTGVMVKLGKVYQNLMVDVKATNVKLLDRACRIVVEATGADLDSARQALEQSDNDVKPAILMLLANIGVEAARERLKQHNGYLREALLGG.

Residues 60-223 (ATASLQAGGR…STGVMVKLGK (164 aa)) form the SIS domain. E88 serves as the catalytic Proton donor. The active site involves E119.

This sequence belongs to the GCKR-like family. MurNAc-6-P etherase subfamily. Homodimer.

It catalyses the reaction N-acetyl-D-muramate 6-phosphate + H2O = N-acetyl-D-glucosamine 6-phosphate + (R)-lactate. It participates in amino-sugar metabolism; 1,6-anhydro-N-acetylmuramate degradation. It functions in the pathway amino-sugar metabolism; N-acetylmuramate degradation. The protein operates within cell wall biogenesis; peptidoglycan recycling. Specifically catalyzes the cleavage of the D-lactyl ether substituent of MurNAc 6-phosphate, producing GlcNAc 6-phosphate and D-lactate. Together with AnmK, is also required for the utilization of anhydro-N-acetylmuramic acid (anhMurNAc) either imported from the medium or derived from its own cell wall murein, and thus plays a role in cell wall recycling. The chain is N-acetylmuramic acid 6-phosphate etherase from Pectobacterium atrosepticum (strain SCRI 1043 / ATCC BAA-672) (Erwinia carotovora subsp. atroseptica).